Reading from the N-terminus, the 609-residue chain is Chaperone protein DnaK (609 aa).

A Phosphothreonine; by autocatalysis modification is found at Thr-173. The interval 580-609 (QAAQGGGAEGQEPKKDNVVDADYEVVDDKK) is disordered. Acidic residues predominate over residues 598-609 (VDADYEVVDDKK).

This sequence belongs to the heat shock protein 70 family.

In terms of biological role, acts as a chaperone. The protein is Chaperone protein DnaK of Brevibacillus brevis (strain 47 / JCM 6285 / NBRC 100599).